The following is a 383-amino-acid chain: Fructose-1,6-bisphosphate aldolase/phosphatase (383 aa).

D11 functions as the Proton acceptor; for FBP phosphatase activity in the catalytic mechanism. D11, H18, D52, and D53 together coordinate Mg(2+). H18 is a beta-D-fructose 1,6-bisphosphate binding site. H18 is a dihydroxyacetone phosphate binding site. A beta-D-fructose 1,6-bisphosphate-binding site is contributed by Y90. Q94 provides a ligand contact to Mg(2+). Residue G103 to N104 coordinates beta-D-fructose 1,6-bisphosphate. D131 serves as a coordination point for Mg(2+). K132 provides a ligand contact to beta-D-fructose 1,6-bisphosphate. K132 serves as a coordination point for dihydroxyacetone phosphate. The active-site Proton donor/acceptor; for FBP aldolase activity is Y228. Residues K231, D232, and D233 each coordinate Mg(2+). The active-site Schiff-base intermediate with DHAP; for FBP aldolase activity is K231. Residues Q241 to H242, R265, D286, and Y347 each bind beta-D-fructose 1,6-bisphosphate. Residues R265 and D286 each contribute to the dihydroxyacetone phosphate site. The disordered stretch occupies residues F361–D383. Positions V374–D383 are enriched in polar residues.

This sequence belongs to the FBP aldolase/phosphatase family. Homooctamer; dimer of tetramers. Mg(2+) is required as a cofactor.

The catalysed reaction is beta-D-fructose 1,6-bisphosphate + H2O = beta-D-fructose 6-phosphate + phosphate. The enzyme catalyses beta-D-fructose 1,6-bisphosphate = D-glyceraldehyde 3-phosphate + dihydroxyacetone phosphate. Its pathway is carbohydrate biosynthesis; gluconeogenesis. In terms of biological role, catalyzes two subsequent steps in gluconeogenesis: the aldol condensation of dihydroxyacetone phosphate (DHAP) and glyceraldehyde-3-phosphate (GA3P) to fructose-1,6-bisphosphate (FBP), and the dephosphorylation of FBP to fructose-6-phosphate (F6P). This chain is Fructose-1,6-bisphosphate aldolase/phosphatase, found in Metallosphaera sedula (strain ATCC 51363 / DSM 5348 / JCM 9185 / NBRC 15509 / TH2).